The primary structure comprises 489 residues: Leukocyte immunoglobulin-like receptor subfamily A member 1 (489 aa).

A signal peptide spans 1-16; the sequence is MTPIVTVLICLRLSLG. Topologically, residues 17–461 are extracellular; the sequence is PRTHVQAGTL…SHPQDYTVEN (445 aa). Ig-like C2-type domains are found at residues 27–116, 119–224, 226–315, and 326–415; these read PKPT…PLEL, TGAY…GVSK, PSLS…DPLD, and PFIS…SDSL. Cys-49 and Cys-98 form a disulfide bridge. N-linked (GlcNAc...) asparagine glycosylation occurs at Asn-140. Disulfide bonds link Cys-145–Cys-197, Cys-157–Cys-167, and Cys-246–Cys-297. 3 N-linked (GlcNAc...) asparagine glycosylation sites follow: Asn-281, Asn-302, and Asn-341. Cys-346 and Cys-397 are joined by a disulfide. Residues 425 to 453 form a disordered region; it reads TLSPPQNKSDSKAGAANTLSPSQNKTASH. N-linked (GlcNAc...) asparagine glycosylation is found at Asn-431 and Asn-448. Polar residues predominate over residues 441-453; it reads NTLSPSQNKTASH. Residues 462–482 form a helical membrane-spanning segment; it reads LIRMGIAGLVLVVLGILLFEA. The Cytoplasmic portion of the chain corresponds to 483–489; it reads QHSQRSL.

In terms of tissue distribution, detected in monocytes and B-cells.

It is found in the membrane. Functionally, may act as receptor for class I MHC antigens. In Homo sapiens (Human), this protein is Leukocyte immunoglobulin-like receptor subfamily A member 1 (LILRA1).